Here is an 89-residue protein sequence, read N- to C-terminus: Small ribosomal subunit protein uS15 (89 aa).

This sequence belongs to the universal ribosomal protein uS15 family. As to quaternary structure, part of the 30S ribosomal subunit. Forms a bridge to the 50S subunit in the 70S ribosome, contacting the 23S rRNA.

Functionally, one of the primary rRNA binding proteins, it binds directly to 16S rRNA where it helps nucleate assembly of the platform of the 30S subunit by binding and bridging several RNA helices of the 16S rRNA. In terms of biological role, forms an intersubunit bridge (bridge B4) with the 23S rRNA of the 50S subunit in the ribosome. The polypeptide is Small ribosomal subunit protein uS15 (Mycolicibacterium vanbaalenii (strain DSM 7251 / JCM 13017 / BCRC 16820 / KCTC 9966 / NRRL B-24157 / PYR-1) (Mycobacterium vanbaalenii)).